A 183-amino-acid chain; its full sequence is Ribosome maturation factor RimM (183 aa).

One can recognise a PRC barrel domain in the interval 104–183; the sequence is EGDYYWKDLM…TIEVDWDPGF (80 aa).

The protein belongs to the RimM family. In terms of assembly, binds ribosomal protein uS19.

It localises to the cytoplasm. In terms of biological role, an accessory protein needed during the final step in the assembly of 30S ribosomal subunit, possibly for assembly of the head region. Essential for efficient processing of 16S rRNA. May be needed both before and after RbfA during the maturation of 16S rRNA. It has affinity for free ribosomal 30S subunits but not for 70S ribosomes. The protein is Ribosome maturation factor RimM of Salmonella arizonae (strain ATCC BAA-731 / CDC346-86 / RSK2980).